A 206-amino-acid chain; its full sequence is Thymidylate kinase (206 aa).

11 to 18 (GIDGAGKT) contributes to the ATP binding site.

The protein belongs to the thymidylate kinase family.

It catalyses the reaction dTMP + ATP = dTDP + ADP. Functionally, phosphorylation of dTMP to form dTDP in both de novo and salvage pathways of dTTP synthesis. The sequence is that of Thymidylate kinase from Burkholderia pseudomallei (strain 1106a).